A 434-amino-acid polypeptide reads, in one-letter code: Methylenetetrahydrofolate--tRNA-(uracil-5-)-methyltransferase TrmFO (434 aa).

10-15 (GAGLAG) is a binding site for FAD.

It belongs to the MnmG family. TrmFO subfamily. Requires FAD as cofactor.

The protein resides in the cytoplasm. The catalysed reaction is uridine(54) in tRNA + (6R)-5,10-methylene-5,6,7,8-tetrahydrofolate + NADH + H(+) = 5-methyluridine(54) in tRNA + (6S)-5,6,7,8-tetrahydrofolate + NAD(+). The enzyme catalyses uridine(54) in tRNA + (6R)-5,10-methylene-5,6,7,8-tetrahydrofolate + NADPH + H(+) = 5-methyluridine(54) in tRNA + (6S)-5,6,7,8-tetrahydrofolate + NADP(+). In terms of biological role, catalyzes the folate-dependent formation of 5-methyl-uridine at position 54 (M-5-U54) in all tRNAs. The protein is Methylenetetrahydrofolate--tRNA-(uracil-5-)-methyltransferase TrmFO of Bacillus cereus (strain Q1).